The following is a 336-amino-acid chain: Thiamine thiazole synthase (336 aa).

Substrate-binding positions include A89, 110 to 111, G118, and C183; that span reads ES. C219 is modified (2,3-didehydroalanine (Cys)). Substrate contacts are provided by residues D221, H236, M288, and 298–300; that span reads RMG.

Belongs to the THI4 family. As to quaternary structure, homooctamer. Requires Fe cation as cofactor. Post-translationally, during the catalytic reaction, a sulfide is transferred from Cys-219 to a reaction intermediate, generating a dehydroalanine residue.

Its subcellular location is the cytoplasm. The protein localises to the nucleus. The enzyme catalyses [ADP-thiazole synthase]-L-cysteine + glycine + NAD(+) = [ADP-thiazole synthase]-dehydroalanine + ADP-5-ethyl-4-methylthiazole-2-carboxylate + nicotinamide + 3 H2O + 2 H(+). Involved in biosynthesis of the thiamine precursor thiazole. Catalyzes the conversion of NAD and glycine to adenosine diphosphate 5-(2-hydroxyethyl)-4-methylthiazole-2-carboxylic acid (ADT), an adenylated thiazole intermediate. The reaction includes an iron-dependent sulfide transfer from a conserved cysteine residue of the protein to a thiazole intermediate. The enzyme can only undergo a single turnover, which suggests it is a suicide enzyme. May have additional roles in adaptation to various stress conditions and in DNA damage tolerance. This Puccinia graminis f. sp. tritici (strain CRL 75-36-700-3 / race SCCL) (Black stem rust fungus) protein is Thiamine thiazole synthase.